The primary structure comprises 167 residues: Small ribosomal subunit protein uS5 (167 aa).

The 64-residue stretch at 12–75 (LQEKLIAVNR…EKARRNIVTV (64 aa)) folds into the S5 DRBM domain.

The protein belongs to the universal ribosomal protein uS5 family. In terms of assembly, part of the 30S ribosomal subunit. Contacts proteins S4 and S8.

Functionally, with S4 and S12 plays an important role in translational accuracy. In terms of biological role, located at the back of the 30S subunit body where it stabilizes the conformation of the head with respect to the body. This is Small ribosomal subunit protein uS5 from Shewanella baltica (strain OS223).